The primary structure comprises 67 residues: UPF0253 protein VS_2370 (67 aa).

This sequence belongs to the UPF0253 family.

This Vibrio atlanticus (strain LGP32) (Vibrio splendidus (strain Mel32)) protein is UPF0253 protein VS_2370.